Here is a 519-residue protein sequence, read N- to C-terminus: Cytochrome P450 CYP99A1 (519 aa).

Residue Cys453 coordinates heme.

This sequence belongs to the cytochrome P450 family. Heme is required as a cofactor.

It is found in the membrane. The chain is Cytochrome P450 CYP99A1 (CYP99A1) from Sorghum bicolor (Sorghum).